The sequence spans 377 residues: Chaperone protein DnaJ (377 aa).

In terms of domain architecture, J spans 5-69; that stretch reads EYYDRLGVSK…QKRAAYDQYG (65 aa). The CR-type zinc-finger motif lies at 133–215; it reads GTEKEVHYNR…CHGTGHEKQS (83 aa). 8 residues coordinate Zn(2+): cysteine 146, cysteine 149, cysteine 163, cysteine 166, cysteine 189, cysteine 192, cysteine 203, and cysteine 206. CXXCXGXG motif repeat units follow at residues 146 to 153, 163 to 170, 189 to 196, and 203 to 210; these read CHTCNGSG, CSKCHGSG, CDVCHGTG, and CPTCHGTG.

The protein belongs to the DnaJ family. In terms of assembly, homodimer. It depends on Zn(2+) as a cofactor.

It localises to the cytoplasm. In terms of biological role, participates actively in the response to hyperosmotic and heat shock by preventing the aggregation of stress-denatured proteins and by disaggregating proteins, also in an autonomous, DnaK-independent fashion. Unfolded proteins bind initially to DnaJ; upon interaction with the DnaJ-bound protein, DnaK hydrolyzes its bound ATP, resulting in the formation of a stable complex. GrpE releases ADP from DnaK; ATP binding to DnaK triggers the release of the substrate protein, thus completing the reaction cycle. Several rounds of ATP-dependent interactions between DnaJ, DnaK and GrpE are required for fully efficient folding. Also involved, together with DnaK and GrpE, in the DNA replication of plasmids through activation of initiation proteins. The chain is Chaperone protein DnaJ from Streptococcus mutans serotype c (strain ATCC 700610 / UA159).